Here is a 452-residue protein sequence, read N- to C-terminus: Bifunctional protein GlmU (452 aa).

The pyrophosphorylase stretch occupies residues 1 to 226 (MSLHIIILAA…LHEVEGVNNR (226 aa)). UDP-N-acetyl-alpha-D-glucosamine is bound by residues 8-11 (LAAG), Lys22, Gln73, 78-79 (GT), 100-102 (YGD), Gly136, Glu151, Asn166, and Asn224. Mg(2+) is bound at residue Asp102. A Mg(2+)-binding site is contributed by Asn224. The tract at residues 227 to 247 (IQLAALERAYQQQVAEELMLA) is linker. Residues 248-452 (GATLRDPARV…IDGWTRPVKK (205 aa)) form an N-acetyltransferase region. UDP-N-acetyl-alpha-D-glucosamine contacts are provided by Arg330 and Lys348. Catalysis depends on His360, which acts as the Proton acceptor. 2 residues coordinate UDP-N-acetyl-alpha-D-glucosamine: Tyr363 and Asn374. Acetyl-CoA-binding positions include Ala377, 383–384 (NY), Ser402, Ala420, and Arg437.

The protein in the N-terminal section; belongs to the N-acetylglucosamine-1-phosphate uridyltransferase family. This sequence in the C-terminal section; belongs to the transferase hexapeptide repeat family. As to quaternary structure, homotrimer. Mg(2+) serves as cofactor.

It localises to the cytoplasm. The catalysed reaction is alpha-D-glucosamine 1-phosphate + acetyl-CoA = N-acetyl-alpha-D-glucosamine 1-phosphate + CoA + H(+). It catalyses the reaction N-acetyl-alpha-D-glucosamine 1-phosphate + UTP + H(+) = UDP-N-acetyl-alpha-D-glucosamine + diphosphate. The protein operates within nucleotide-sugar biosynthesis; UDP-N-acetyl-alpha-D-glucosamine biosynthesis; N-acetyl-alpha-D-glucosamine 1-phosphate from alpha-D-glucosamine 6-phosphate (route II): step 2/2. It functions in the pathway nucleotide-sugar biosynthesis; UDP-N-acetyl-alpha-D-glucosamine biosynthesis; UDP-N-acetyl-alpha-D-glucosamine from N-acetyl-alpha-D-glucosamine 1-phosphate: step 1/1. It participates in bacterial outer membrane biogenesis; LPS lipid A biosynthesis. In terms of biological role, catalyzes the last two sequential reactions in the de novo biosynthetic pathway for UDP-N-acetylglucosamine (UDP-GlcNAc). The C-terminal domain catalyzes the transfer of acetyl group from acetyl coenzyme A to glucosamine-1-phosphate (GlcN-1-P) to produce N-acetylglucosamine-1-phosphate (GlcNAc-1-P), which is converted into UDP-GlcNAc by the transfer of uridine 5-monophosphate (from uridine 5-triphosphate), a reaction catalyzed by the N-terminal domain. This chain is Bifunctional protein GlmU, found in Hahella chejuensis (strain KCTC 2396).